The primary structure comprises 230 residues: Cytidylate kinase (230 aa).

An ATP-binding site is contributed by 11-19 (GQSAAGKST).

It belongs to the cytidylate kinase family. Type 1 subfamily.

Its subcellular location is the cytoplasm. It catalyses the reaction CMP + ATP = CDP + ADP. It carries out the reaction dCMP + ATP = dCDP + ADP. This Chloroflexus aggregans (strain MD-66 / DSM 9485) protein is Cytidylate kinase.